A 751-amino-acid chain; its full sequence is Photosystem I P700 chlorophyll a apoprotein A1 (751 aa).

The next 8 membrane-spanning stretches (helical) occupy residues 73-96 (VFSAHFGQLAIIEIWLSGMFFHGA), 159-182 (LYITALTGLIFSAVLFFAGWFHYH), 198-222 (LNHHLSGLLGLGCLSWAGHQIHVSL), 294-312 (VAHHHLALAVLFILAGHMY), 349-372 (WHAQLSLNLAMMGSLSIIVAQHMY), 388-414 (LSLFTHHYWIGGFCIVGAAAHAAIFMV), 436-458 (AIISHLNWVCIFLGLHSFGLYIH), and 533-551 (FLVHHIHAFTIHVTVLILL). Residues Cys575 and Cys584 each coordinate [4Fe-4S] cluster. 2 helical membrane passes run 591–612 (HVFLGLFWMYNSISVAIFHFSW) and 665–687 (LSAYGLMFLGAHFVWAFTLMFLF). His676 is a chlorophyll a' binding site. Chlorophyll a is bound by residues Met684 and Tyr692. Trp693 is a phylloquinone binding site. The helical transmembrane segment at 725 to 745 (AVGVAHYLLGGIATTWSFFLA) threads the bilayer.

This sequence belongs to the PsaA/PsaB family. In terms of assembly, the PsaA/B heterodimer binds the P700 chlorophyll special pair and subsequent electron acceptors. PSI consists of a core antenna complex that captures photons, and an electron transfer chain that converts photonic excitation into a charge separation. The eukaryotic PSI reaction center is composed of at least 11 subunits. It depends on P700 is a chlorophyll a/chlorophyll a' dimer, A0 is one or more chlorophyll a, A1 is one or both phylloquinones and FX is a shared 4Fe-4S iron-sulfur center. as a cofactor.

It localises to the plastid. The protein resides in the chloroplast thylakoid membrane. It carries out the reaction reduced [plastocyanin] + hnu + oxidized [2Fe-2S]-[ferredoxin] = oxidized [plastocyanin] + reduced [2Fe-2S]-[ferredoxin]. PsaA and PsaB bind P700, the primary electron donor of photosystem I (PSI), as well as the electron acceptors A0, A1 and FX. PSI is a plastocyanin/cytochrome c6-ferredoxin oxidoreductase, converting photonic excitation into a charge separation, which transfers an electron from the donor P700 chlorophyll pair to the spectroscopically characterized acceptors A0, A1, FX, FA and FB in turn. Oxidized P700 is reduced on the lumenal side of the thylakoid membrane by plastocyanin or cytochrome c6. This is Photosystem I P700 chlorophyll a apoprotein A1 from Euglena gracilis.